The primary structure comprises 146 residues: Sperm surface protein Sp17 (146 aa).

Positions 76–88 are enriched in basic and acidic residues; the sequence is EHESEKCEAEEKS. The tract at residues 76–109 is disordered; that stretch reads EHESEKCEAEEKSQSVTEEETPVLTIDSEDDKDK. Residues 92-108 show a composition bias toward acidic residues; sequence TEEETPVLTIDSEDDKD. The IQ domain maps to 110–139; the sequence is EEMAALKIQAAFRGHLAREDVKKIRTNKAE.

As to quaternary structure, homodimer. May interact with ROPN1. Post-translationally, the N-terminus is blocked. As to expression, testis- and sperm-specific.

It is found in the membrane. Functionally, sperm surface zona pellucida binding protein. Helps to bind spermatozoa to the zona pellucida with high affinity. Might function in binding zona pellucida and carbohydrates. The sequence is that of Sperm surface protein Sp17 (SPA17) from Oryctolagus cuniculus (Rabbit).